A 97-amino-acid chain; its full sequence is DNA-directed RNA polymerase subunit omega (97 aa).

This sequence belongs to the RNA polymerase subunit omega family. The RNAP catalytic core consists of 2 alpha, 1 beta, 1 beta' and 1 omega subunit. When a sigma factor is associated with the core the holoenzyme is formed, which can initiate transcription.

It carries out the reaction RNA(n) + a ribonucleoside 5'-triphosphate = RNA(n+1) + diphosphate. Its function is as follows. Promotes RNA polymerase assembly. Latches the N- and C-terminal regions of the beta' subunit thereby facilitating its interaction with the beta and alpha subunits. In Coxiella burnetii (strain Dugway 5J108-111), this protein is DNA-directed RNA polymerase subunit omega.